The sequence spans 118 residues: C-X-C motif chemokine 17 (118 aa).

Positions 1 to 22 (MKVLISSLLLLLPLMLMSVVSS) are cleaved as a signal peptide. Intrachain disulfides connect Cys74–Cys102 and Cys76–Cys109.

It belongs to the intercrine alpha (chemokine CxC) family.

The protein resides in the secreted. Chemokine that acts as a chemoattractant for monocytes, macrophages and dendritic cells. Plays a role in angiogenesis and possibly in the development of tumors. Acts as an anti-inflammatory in the stomach. May play a role in the innate defense against infections. Activates the C-X-C chemokine receptor GPR35 to induce a rapid and transient rise in the level of intracellular calcium ions. In Bos taurus (Bovine), this protein is C-X-C motif chemokine 17 (CXCL17).